The primary structure comprises 714 residues: Protein spire homolog 2 (714 aa).

Positions 22 to 203 (LSLEEVLKAY…RALFVETLEL (182 aa)) constitute a KIND domain. The disordered stretch occupies residues 136-162 (DSEDSGCGAADEGYGGPEEEEEAEGVP). 3 consecutive WH2 domains span residues 248 to 262 (QLMR…LKKV), 278 to 296 (PFEM…LRKV), and 342 to 359 (LHEK…LRPV). Phosphoserine occurs at positions 371, 440, 442, and 476. The tract at residues 453 to 516 (VASGLQSATH…SSGDRPEASM (64 aa)) is disordered. A compositionally biased stretch (polar residues) spans 486–496 (DQGTCPASVSD). Residues 534–554 (LALTVEEVMDVRRVLVKAEME) are spir-box.

Belongs to the spire family.

It is found in the cytoplasm. It localises to the cytoskeleton. The protein resides in the cytosol. The protein localises to the cell membrane. Its subcellular location is the cytoplasmic vesicle membrane. Functionally, acts as an actin nucleation factor, remains associated with the slow-growing pointed end of the new filament. Involved in intracellular vesicle transport along actin fibers, providing a novel link between actin cytoskeleton dynamics and intracellular transport. Required for asymmetric spindle positioning and asymmetric cell division during meiosis. Required for normal formation of the cleavage furrow and for polar body extrusion during female germ cell meiosis. Also acts in the nucleus: together with SPIRE1 and SPIRE2, promotes assembly of nuclear actin filaments in response to DNA damage in order to facilitate movement of chromatin and repair factors after DNA damage. This is Protein spire homolog 2 (SPIRE2) from Homo sapiens (Human).